Here is a 160-residue protein sequence, read N- to C-terminus: SsrA-binding protein (160 aa).

This sequence belongs to the SmpB family.

It localises to the cytoplasm. In terms of biological role, required for rescue of stalled ribosomes mediated by trans-translation. Binds to transfer-messenger RNA (tmRNA), required for stable association of tmRNA with ribosomes. tmRNA and SmpB together mimic tRNA shape, replacing the anticodon stem-loop with SmpB. tmRNA is encoded by the ssrA gene; the 2 termini fold to resemble tRNA(Ala) and it encodes a 'tag peptide', a short internal open reading frame. During trans-translation Ala-aminoacylated tmRNA acts like a tRNA, entering the A-site of stalled ribosomes, displacing the stalled mRNA. The ribosome then switches to translate the ORF on the tmRNA; the nascent peptide is terminated with the 'tag peptide' encoded by the tmRNA and targeted for degradation. The ribosome is freed to recommence translation, which seems to be the essential function of trans-translation. The chain is SsrA-binding protein from Dinoroseobacter shibae (strain DSM 16493 / NCIMB 14021 / DFL 12).